The chain runs to 141 residues: Large ribosomal subunit protein uL11 (141 aa).

The protein belongs to the universal ribosomal protein uL11 family. In terms of assembly, part of the ribosomal stalk of the 50S ribosomal subunit. Interacts with L10 and the large rRNA to form the base of the stalk. L10 forms an elongated spine to which L12 dimers bind in a sequential fashion forming a multimeric L10(L12)X complex. One or more lysine residues are methylated.

Forms part of the ribosomal stalk which helps the ribosome interact with GTP-bound translation factors. The chain is Large ribosomal subunit protein uL11 from Acaryochloris marina (strain MBIC 11017).